Reading from the N-terminus, the 193-residue chain is Ion-translocating oxidoreductase complex subunit A (193 aa).

A run of 6 helical transmembrane segments spans residues 5–25, 39–59, 62–82, 102–122, 134–154, and 171–191; these read LLLFVGTVLVNNFVLVKFLGL, IGMGLATTFVLTLASVCAWMV, FILLPLGLIYLRTLAFILVIA, LLGIFLPLITTNCAVLGVALL, AVYGFSAAAGFSLVMVLFAAI, and SIALITAGLMSLAFMGFTGLV.

The protein belongs to the NqrDE/RnfAE family. In terms of assembly, the complex is composed of six subunits: RnfA, RnfB, RnfC, RnfD, RnfE and RnfG.

Its subcellular location is the cell inner membrane. Functionally, part of a membrane-bound complex that couples electron transfer with translocation of ions across the membrane. The polypeptide is Ion-translocating oxidoreductase complex subunit A (Yersinia pestis bv. Antiqua (strain Nepal516)).